Consider the following 322-residue polypeptide: Thioredoxin reductase (322 aa).

FAD is bound by residues 12 to 15 (SGPA), 34 to 42 (EGAVTAGGA), Asn-51, and Val-84. The cysteines at positions 136 and 139 are disulfide-linked. NADP(+) contacts are provided by His-176, Arg-182, Ile-239, and Tyr-259. FAD is bound by residues Asp-279 and 286–289 (RQAI). Arg-286 contributes to the NADP(+) binding site.

This sequence belongs to the class-II pyridine nucleotide-disulfide oxidoreductase family. Homodimer. It depends on FAD as a cofactor.

It localises to the cytoplasm. The catalysed reaction is [thioredoxin]-dithiol + NADP(+) = [thioredoxin]-disulfide + NADPH + H(+). The sequence is that of Thioredoxin reductase from Streptomyces coelicolor (strain ATCC BAA-471 / A3(2) / M145).